A 445-amino-acid chain; its full sequence is MNRHLCVWLFRHPSLNGYLQCHIQLHSHQFRQIHLDTRLQVFRQNRNCILHLLSKNWSRRYCHQDTKMLWKHKALQKYMENLSKEYQTLEQCLQHIPVNEENRRSLNRRHAELAPLAAIYQEIQETEQAIEELESMCKSLNKQDEKQLQELALEERQTIDQKINMLYNELFQSLVPKEKYDKNDVILEVTAGRTTGGDICQQFTREIFDMYQNYSCYKHWQFELLNYTPADYGGLHHAAARISGDGVYKHLKYEGGIHRVQRIPEVGLSSRMQRIHTGTMSVIVLPQPDEVDVKLDPKDLRIDTFRAKGAGGQHVNKTDSAVRLVHIPTGLVVECQQERSQIKNKEIAFRVLRARLYQQIIEKDKRQQQSARKLQVGTRAQSERIRTYNFTQDRVSDHRIAYEVRDIKEFLCGGKGLDQLIQRLLQSADEEAIAELLDEHLKSAK.

The N-terminal 61 residues, 1-61, are a transit peptide targeting the mitochondrion; it reads MNRHLCVWLF…LLSKNWSRRY (61 aa). The GGQ domain stretch occupies residues 297–361; the sequence is PKDLRIDTFR…LRARLYQQII (65 aa). The GGQ signature appears at 311–313; it reads GGQ. N5-methylglutamine is present on glutamine 313.

The protein belongs to the prokaryotic/mitochondrial release factor family. In terms of processing, methylation of glutamine in the GGQ triplet by HEMK1 is conserved from bacteria to mammals.

It localises to the mitochondrion. Mitochondrial peptide chain release factor that directs the termination of translation in response to the peptide chain non-canonical stop codons AGG and AGA. Non-canonical termination codons AGG and AGA are found at the end of MT-CO1/COX1 and MT-ND6/ND6 open reading frames, respectively. Recognizes non-canonical stop codons via a network of interactions between the codon, MTRF1 and the ribosomal RNA (rRNA): in contrast to other translation release factors, which identify the codon in the A-site via direct interactions of amino acid side chains with the bases, MTRF1 repositions the first 2 bases of the stop codon to use an intricate network of interactions that includes residues of the release factor, the rRNA of the small ribosomal subunit, as well as neighboring bases of the mRNA. This is Peptide chain release factor 1, mitochondrial from Homo sapiens (Human).